The primary structure comprises 154 residues: MGVGLSTLEQKLTEIISAPVEALGYELVGIEFIRGRQSTLRIYIDSDDGITVDACADVSHQVSAVLDVEDPITVAYNLEVSSPGLDRPMFTAEHYTRYLGEEVTLVLRMAMQNRRKWQGIIKAVDGEMITVTVDGKDEVFALSNIQKANLVPHF.

The protein belongs to the RimP family.

The protein resides in the cytoplasm. Required for maturation of 30S ribosomal subunits. This chain is Ribosome maturation factor RimP, found in Yersinia pseudotuberculosis serotype O:1b (strain IP 31758).